The sequence spans 196 residues: Ribosome maturation factor RimP (196 aa).

Belongs to the RimP family.

The protein localises to the cytoplasm. Functionally, required for maturation of 30S ribosomal subunits. The protein is Ribosome maturation factor RimP of Dinoroseobacter shibae (strain DSM 16493 / NCIMB 14021 / DFL 12).